Consider the following 647-residue polypeptide: MARKSDEDTNPMDKFMDRLRGSPGDGGPGRPDPSQRKVHFSIWYFILALLLIVWMQTYMGEQQSEKISYSEFKQRVHDGNVQNLVIEHDRITGTMKENDGPGRRFNTIRVEDPELVKQLEAKNIRFSGDVQNPWLGLITWWLLPFAIMIFFWSFLMRRMGGGPQGVLSVGKARVKIFAEKEITITFDDVAGIDEAKGELEEIVQFLKDPGKFQRLGGRIPKGVLLVGAPGTGKTLLAKAVAGEAGVPFFSMSGSEFVEMFVGVGAARVRDLFGQAKDHAPCIIFIDELDALGKARGLNPIGGHDEREQTLNQLLVEMDGFDPRSGVIIMAATNRPEILDPALLRPGRFDRHVAIDKPDIRGREAILRVHVKEVKLGSEVDLKKIAGMTPGFVGADLANLVNEAALVAARRDRDEVTMADFQEAADRIIGGLEKKNRAMNPKEKEIVAYHEAGHALVAMLLPNVDPVNKVSIIPRGIAALGYTQQLPTEDRYLMTRNELLDRLQVLLGGRVSEEIIFGDVSTGAQNDLQRATDIARSMVMEYGMSERLGPLTYTRDPRSAHLDLGLGSRERDYSEMIAQEIDEEITRIVEDAHEKVRATLKRERGCLEKLAKILLEKESIDGEELKQFCQEVKSHIARDPVQVEGGAA.

The interval M1–P33 is disordered. Over M1–H39 the chain is Cytoplasmic. Residues F40–G60 form a helical membrane-spanning segment. At E61 to W134 the chain is on the periplasmic side. A helical membrane pass occupies residues L135–L155. The Cytoplasmic portion of the chain corresponds to M156 to A647. G227–T234 is a binding site for ATP. Zn(2+) is bound at residue H449. E450 is an active-site residue. The Zn(2+) site is built by H453 and D526.

The protein in the central section; belongs to the AAA ATPase family. In the C-terminal section; belongs to the peptidase M41 family. In terms of assembly, homohexamer. Zn(2+) serves as cofactor.

It is found in the cell inner membrane. Acts as a processive, ATP-dependent zinc metallopeptidase for both cytoplasmic and membrane proteins. Plays a role in the quality control of integral membrane proteins. In Syntrophobacter fumaroxidans (strain DSM 10017 / MPOB), this protein is ATP-dependent zinc metalloprotease FtsH.